The primary structure comprises 138 residues: MKSDSPVHRESHTGCQSPCPLRCLPARLEGSTKRRLAANARERRRMQGLNTAFDSLRKVVPQWGEDKQLSKYETLQMALSYIMALSRILSEAERYSRTDPEEWTNIQYDHIEEEQCLSYMEVRCPRDCDRYLPQTFSH.

In terms of domain architecture, bHLH spans Lys33 to Leu85.

The protein localises to the nucleus. It is found in the perikaryon. It localises to the cell projection. The protein resides in the axon. Functionally, transcription factor that binds to DNA at the consensus sequence 5'-CAG[GC]TG-3'. Positively regulates the determination of retinal ganglion cell fate and formation of the optic nerve and retino-hypothalamic tract. Required for retinal circadian rhythm photoentrainment. Plays a role in brainstem auditory signaling and binaural processing. Regulates the differentiation of olfactory receptor neurons. During retinal neurogenesis, activates the transcription of several genes such as brn3d, coe3, cbfa2t2, glis2, elrC and xgadd45-gamma. This chain is Transcription factor Atoh7-a, found in Xenopus laevis (African clawed frog).